The primary structure comprises 68 residues: Amphipathic peptide OcyC1 (68 aa).

The N-terminal stretch at 1-23 (MKAQLCILLIALVLFQTFSQSDA) is a signal peptide. Phenylalanine 36 is modified (phenylalanine amide). Positions 38-68 (RRGLNDLDDLDELFDGEISQADVDFLNELMR) are excised as a propeptide.

It belongs to the non-disulfide-bridged peptide (NDBP) superfamily. Short antimicrobial peptide (group 4) family. In terms of tissue distribution, expressed by the venom gland.

It is found in the secreted. Its subcellular location is the target cell membrane. Its function is as follows. Antimicrobial peptide. Inhibits the growth of Gram-positive and Gram-negative bacteria. Shows antifungal activity with MIC values ranging from 12.5 to 25 uM. Also shows an inhibitory activity on C.albicans biofilms at high concentrations. Shows low cytotoxic activity and has weak hemolytic activity. In Opisthacanthus cayaporum (South American scorpion), this protein is Amphipathic peptide OcyC1.